A 284-amino-acid chain; its full sequence is Lipase chaperone (284 aa).

The chain crosses the membrane as a helical span at residues 4–24 (IAWSLGILVTIGALCAIVWPS).

This sequence belongs to the lipase chaperone family.

The protein resides in the cell inner membrane. Its function is as follows. May be involved in the folding of the extracellular lipase during its passage through the periplasm. The polypeptide is Lipase chaperone (lifO) (Vibrio cholerae serotype O1 (strain ATCC 39315 / El Tor Inaba N16961)).